The chain runs to 207 residues: Thiamine-phosphate synthase (207 aa).

4-amino-2-methyl-5-(diphosphooxymethyl)pyrimidine contacts are provided by residues 36–40 and Asp68; that span reads QLRIK. Positions 69 and 88 each coordinate Mg(2+). Residue Ser106 participates in 4-amino-2-methyl-5-(diphosphooxymethyl)pyrimidine binding. 132-134 contributes to the 2-[(2R,5Z)-2-carboxy-4-methylthiazol-5(2H)-ylidene]ethyl phosphate binding site; sequence TKT. A 4-amino-2-methyl-5-(diphosphooxymethyl)pyrimidine-binding site is contributed by Lys135. 2-[(2R,5Z)-2-carboxy-4-methylthiazol-5(2H)-ylidene]ethyl phosphate contacts are provided by residues Gly162 and 182-183; that span reads VS.

Belongs to the thiamine-phosphate synthase family. Requires Mg(2+) as cofactor.

It catalyses the reaction 2-[(2R,5Z)-2-carboxy-4-methylthiazol-5(2H)-ylidene]ethyl phosphate + 4-amino-2-methyl-5-(diphosphooxymethyl)pyrimidine + 2 H(+) = thiamine phosphate + CO2 + diphosphate. It carries out the reaction 2-(2-carboxy-4-methylthiazol-5-yl)ethyl phosphate + 4-amino-2-methyl-5-(diphosphooxymethyl)pyrimidine + 2 H(+) = thiamine phosphate + CO2 + diphosphate. The enzyme catalyses 4-methyl-5-(2-phosphooxyethyl)-thiazole + 4-amino-2-methyl-5-(diphosphooxymethyl)pyrimidine + H(+) = thiamine phosphate + diphosphate. It functions in the pathway cofactor biosynthesis; thiamine diphosphate biosynthesis; thiamine phosphate from 4-amino-2-methyl-5-diphosphomethylpyrimidine and 4-methyl-5-(2-phosphoethyl)-thiazole: step 1/1. Its function is as follows. Condenses 4-methyl-5-(beta-hydroxyethyl)thiazole monophosphate (THZ-P) and 2-methyl-4-amino-5-hydroxymethyl pyrimidine pyrophosphate (HMP-PP) to form thiamine monophosphate (TMP). This is Thiamine-phosphate synthase from Pyrococcus abyssi (strain GE5 / Orsay).